Reading from the N-terminus, the 108-residue chain is Nucleoid-associated protein Pmen_2646 (108 aa).

The disordered stretch occupies residues 1 to 25 (MMKGGMAGLMKQAQQMQEKMQKMQE).

This sequence belongs to the YbaB/EbfC family. As to quaternary structure, homodimer.

Its subcellular location is the cytoplasm. It localises to the nucleoid. In terms of biological role, binds to DNA and alters its conformation. May be involved in regulation of gene expression, nucleoid organization and DNA protection. This chain is Nucleoid-associated protein Pmen_2646, found in Ectopseudomonas mendocina (strain ymp) (Pseudomonas mendocina).